Reading from the N-terminus, the 345-residue chain is Phosphoribosylformylglycinamidine cyclo-ligase (345 aa).

Belongs to the AIR synthase family.

It is found in the cytoplasm. The enzyme catalyses 2-formamido-N(1)-(5-O-phospho-beta-D-ribosyl)acetamidine + ATP = 5-amino-1-(5-phospho-beta-D-ribosyl)imidazole + ADP + phosphate + H(+). It participates in purine metabolism; IMP biosynthesis via de novo pathway; 5-amino-1-(5-phospho-D-ribosyl)imidazole from N(2)-formyl-N(1)-(5-phospho-D-ribosyl)glycinamide: step 2/2. The sequence is that of Phosphoribosylformylglycinamidine cyclo-ligase from Pseudoalteromonas atlantica (strain T6c / ATCC BAA-1087).